Consider the following 556-residue polypeptide: Phenylalanine--tRNA ligase beta subunit (556 aa).

Residues 278–353 (LTPKEFEVEL…IAYGYNNIEP (76 aa)) enclose the B5 domain. Positions 331, 337, 340, and 341 each coordinate Mg(2+).

It belongs to the phenylalanyl-tRNA synthetase beta subunit family. Type 2 subfamily. In terms of assembly, tetramer of two alpha and two beta subunits. The cofactor is Mg(2+).

Its subcellular location is the cytoplasm. The enzyme catalyses tRNA(Phe) + L-phenylalanine + ATP = L-phenylalanyl-tRNA(Phe) + AMP + diphosphate + H(+). The sequence is that of Phenylalanine--tRNA ligase beta subunit from Pyrococcus horikoshii (strain ATCC 700860 / DSM 12428 / JCM 9974 / NBRC 100139 / OT-3).